Reading from the N-terminus, the 983-residue chain is ABC transporter A family member 2 (983 aa).

6 helical membrane passes run 33-53 (FLQL…QAAM), 221-241 (IVAL…FGFV), 279-299 (ILTA…QFDF), 305-325 (FPVV…LAFM), 339-359 (VGFF…SGFP), and 416-436 (VLTI…WFVL). In terms of domain architecture, ABC transporter spans 518–763 (VQIRGLAKTY…FGTGFIANIS (246 aa)). 564 to 571 (GPNGAGKT) provides a ligand contact to ATP. The tract at residues 963–983 (RSGSTSSRRFSRSGSSRRFSS) is disordered.

Belongs to the ABC transporter superfamily. ABCA family. CPR flippase (TC 3.A.1.211) subfamily.

Its subcellular location is the membrane. The sequence is that of ABC transporter A family member 2 (ABCA2) from Arabidopsis thaliana (Mouse-ear cress).